The following is a 476-amino-acid chain: ATP synthase subunit beta (476 aa).

154-161 (GGAGVGKT) contributes to the ATP binding site.

This sequence belongs to the ATPase alpha/beta chains family. F-type ATPases have 2 components, CF(1) - the catalytic core - and CF(0) - the membrane proton channel. CF(1) has five subunits: alpha(3), beta(3), gamma(1), delta(1), epsilon(1). CF(0) has four main subunits: a(1), b(1), b'(1) and c(9-12).

It localises to the cell inner membrane. It carries out the reaction ATP + H2O + 4 H(+)(in) = ADP + phosphate + 5 H(+)(out). Its function is as follows. Produces ATP from ADP in the presence of a proton gradient across the membrane. The catalytic sites are hosted primarily by the beta subunits. The sequence is that of ATP synthase subunit beta from Rhodopseudomonas palustris (strain BisB5).